The primary structure comprises 160 residues: METEKPNTDVKVAQDLEKLKLDEKHKDEKKDKKDKKDKKDKKDKKEKTPEEIEAKRLKKEAKNKDKTPEELEAKRLKKEAKNKDKTPEELEAKRLKKEAKEKSKLEGKKDKDHKDEGKKDKKDKDHKDKDHKDEGKKDKKDKEHKDEGKKDKKDKEHKKE.

The segment covering 1-31 (METEKPNTDVKVAQDLEKLKLDEKHKDEKKD) has biased composition (basic and acidic residues). Residues 1–160 (METEKPNTDV…DKKDKEHKKE (160 aa)) are disordered. Residues 20-111 (KLDEKHKDEK…KSKLEGKKDK (92 aa)) adopt a coiled-coil conformation. Over residues 32-42 (KKDKKDKKDKK) the composition is skewed to basic residues. Over residues 43 to 160 (DKKEKTPEEI…DKKDKEHKKE (118 aa)) the composition is skewed to basic and acidic residues.

This is an uncharacterized protein from Dictyostelium discoideum (Social amoeba).